The following is a 186-amino-acid chain: Chromosomal replication initiator protein DnaA (186 aa).

Glu-1 is a region of interest (domain I, interacts with DnaA modulators). A region of interest (domain II) is located at residue Glu-1. Residues Glu-1–Ser-99 form a domain III, AAA+ region region. Residues Leu-100–Thr-186 are domain IV, binds dsDNA.

This sequence belongs to the DnaA family. Oligomerizes as a right-handed, spiral filament on DNA at oriC.

The protein resides in the cytoplasm. Its function is as follows. Plays an essential role in the initiation and regulation of chromosomal replication. ATP-DnaA binds to the origin of replication (oriC) to initiate formation of the DNA replication initiation complex once per cell cycle. Binds the DnaA box (a 9 base pair repeat at the origin) and separates the double-stranded (ds)DNA. Forms a right-handed helical filament on oriC DNA; dsDNA binds to the exterior of the filament while single-stranded (ss)DNA is stabiized in the filament's interior. The ATP-DnaA-oriC complex binds and stabilizes one strand of the AT-rich DNA unwinding element (DUE), permitting loading of DNA polymerase. After initiation quickly degrades to an ADP-DnaA complex that is not apt for DNA replication. Binds acidic phospholipids. This is Chromosomal replication initiator protein DnaA from Wolbachia sp.